The chain runs to 355 residues: Phenylalanine--tRNA ligase alpha subunit (355 aa).

Residue Glu273 coordinates Mg(2+).

The protein belongs to the class-II aminoacyl-tRNA synthetase family. Phe-tRNA synthetase alpha subunit type 1 subfamily. As to quaternary structure, tetramer of two alpha and two beta subunits. It depends on Mg(2+) as a cofactor.

It localises to the cytoplasm. It carries out the reaction tRNA(Phe) + L-phenylalanine + ATP = L-phenylalanyl-tRNA(Phe) + AMP + diphosphate + H(+). This is Phenylalanine--tRNA ligase alpha subunit from Bifidobacterium longum subsp. infantis (strain ATCC 15697 / DSM 20088 / JCM 1222 / NCTC 11817 / S12).